Here is a 217-residue protein sequence, read N- to C-terminus: Uracil-DNA glycosylase (217 aa).

The Proton acceptor role is filled by Asp62.

This sequence belongs to the uracil-DNA glycosylase (UDG) superfamily. UNG family.

The protein localises to the cytoplasm. The enzyme catalyses Hydrolyzes single-stranded DNA or mismatched double-stranded DNA and polynucleotides, releasing free uracil.. In terms of biological role, excises uracil residues from the DNA which can arise as a result of misincorporation of dUMP residues by DNA polymerase or due to deamination of cytosine. This is Uracil-DNA glycosylase from Streptococcus mutans serotype c (strain ATCC 700610 / UA159).